Here is a 189-residue protein sequence, read N- to C-terminus: UPF0340 protein EF_1967 (189 aa).

It belongs to the UPF0340 family.

This chain is UPF0340 protein EF_1967, found in Enterococcus faecalis (strain ATCC 700802 / V583).